A 623-amino-acid chain; its full sequence is Interferon-induced GTP-binding protein Mx3 (623 aa).

Residues aspartate 31 to proline 304 form the Dynamin-type G domain. Residues glycine 41 to serine 48 form a G1 motif region. Position 41–48 (glycine 41–serine 48) interacts with GTP. The segment at valine 66–arginine 68 is G2 motif. The G3 motif stretch occupies residues aspartate 142–glycine 145. GTP contacts are provided by residues aspartate 142 to isoleucine 146 and threonine 211 to aspartate 214. The tract at residues threonine 211–aspartate 214 is G4 motif. Residues lysine 243–glycine 246 form a G5 motif region. Residues leucine 537–phenylalanine 623 form the GED domain.

Belongs to the TRAFAC class dynamin-like GTPase superfamily. Dynamin/Fzo/YdjA family.

The protein resides in the cytoplasm. In terms of biological role, does not inhibit strain RB-1 of the fish pathogen, infectious hematopoietic necrosis virus (IHNV). The polypeptide is Interferon-induced GTP-binding protein Mx3 (Oncorhynchus mykiss (Rainbow trout)).